The sequence spans 426 residues: Spermidine/putrescine import ATP-binding protein PotA (426 aa).

Positions isoleucine 6–isoleucine 238 constitute an ABC transporter domain. Glycine 40–serine 47 contributes to the ATP binding site.

The protein belongs to the ABC transporter superfamily. Spermidine/putrescine importer (TC 3.A.1.11.1) family. As to quaternary structure, the complex is composed of two ATP-binding proteins (PotA), two transmembrane proteins (PotB and PotC) and a solute-binding protein (PotD).

The protein localises to the cell membrane. It catalyses the reaction ATP + H2O + polyamine-[polyamine-binding protein]Side 1 = ADP + phosphate + polyamineSide 2 + [polyamine-binding protein]Side 1.. In terms of biological role, part of the ABC transporter complex PotABCD involved in spermidine/putrescine import. Responsible for energy coupling to the transport system. This is Spermidine/putrescine import ATP-binding protein PotA from Lactococcus lactis subsp. cremoris (strain SK11).